Reading from the N-terminus, the 328-residue chain is Zinc transporter ZIP13 (328 aa).

Residues 1 to 7 (MPGCPCP) are Lumenal-facing. Residues 8 to 28 (GCGMAGPRLLFLTALALELLG) traverse the membrane as a helical segment. Residues 29–68 (RAGGSQPALRSRGTATACRLDNKESESWGALLSGERLDTW) are Cytoplasmic-facing. A helical transmembrane segment spans residues 69 to 89 (ICSLLGSLMVGLSGVFPLLVI). Residues 90-108 (PLEMGTMLRSEAGAWHLKQ) are Lumenal-facing. The helical transmembrane segment at 109–129 (LLSFALGGLLGNVFLHLLPEA) threads the bilayer. The Cytoplasmic segment spans residues 130–149 (WAYTCSASPGGEGQSLQQQQ). A helical membrane pass occupies residues 150 to 170 (QLGLWVIAGILTFLALEKMFL). The Lumenal segment spans residues 171–199 (DSKEEGTSQVSGYLNLLANTIDNFTHGLA). The chain crosses the membrane as a helical span at residues 200–220 (VAASFLVSKKIGLLTTMAILL). The XEXPHE-motif motif lies at 221-226 (HEIPHE). The Cytoplasmic portion of the chain corresponds to 221–242 (HEIPHEVGDFAILLRAGFDRWS). Residues 243-263 (AAKLQLSTALGGLLGAGFAIC) traverse the membrane as a helical segment. Topologically, residues 264–273 (TQSPKGVEET) are lumenal. A helical membrane pass occupies residues 274 to 294 (AAWVLPFTSGGFLYIALVNVL). At 295–306 (PDLLEEEDPWRS) the chain is on the cytoplasmic side. A helical transmembrane segment spans residues 307-327 (LQQLLLLCAGIVVMVLFSLFV). Aspartate 328 is a topological domain (lumenal).

It belongs to the ZIP transporter (TC 2.A.5) family. In terms of assembly, homodimer.

Its subcellular location is the golgi apparatus membrane. It localises to the cytoplasmic vesicle membrane. It is found in the endoplasmic reticulum membrane. The catalysed reaction is Zn(2+)(in) = Zn(2+)(out). Functions as a zinc transporter transporting Zn(2+) from the Golgi apparatus to the cytosol and thus influences the zinc level at least in areas of the cytosol. May regulate beige adipocyte differentiation. In Pongo abelii (Sumatran orangutan), this protein is Zinc transporter ZIP13.